Reading from the N-terminus, the 180-residue chain is Large ribosomal subunit protein uL6 (180 aa).

The protein belongs to the universal ribosomal protein uL6 family. Part of the 50S ribosomal subunit.

In terms of biological role, this protein binds to the 23S rRNA, and is important in its secondary structure. It is located near the subunit interface in the base of the L7/L12 stalk, and near the tRNA binding site of the peptidyltransferase center. The chain is Large ribosomal subunit protein uL6 from Clostridioides difficile (strain 630) (Peptoclostridium difficile).